Here is a 347-residue protein sequence, read N- to C-terminus: GMP reductase (347 aa).

108–131 provides a ligand contact to NADP(+); that stretch reads ADFEKTKQILDLNSALNFVCIDVA. K(+)-binding residues include G181 and G183. Residue C186 is the Thioimidate intermediate of the active site. Position 216 to 239 (216 to 239) interacts with NADP(+); that stretch reads IVSDGGCTTPGDVAKAFGGGADFV.

This sequence belongs to the IMPDH/GMPR family. GuaC type 1 subfamily. As to quaternary structure, homotetramer.

The enzyme catalyses IMP + NH4(+) + NADP(+) = GMP + NADPH + 2 H(+). Functionally, catalyzes the irreversible NADPH-dependent deamination of GMP to IMP. It functions in the conversion of nucleobase, nucleoside and nucleotide derivatives of G to A nucleotides, and in maintaining the intracellular balance of A and G nucleotides. This is GMP reductase from Escherichia coli O81 (strain ED1a).